We begin with the raw amino-acid sequence, 573 residues long: Pentatricopeptide repeat-containing protein At3g62890 (573 aa).

10 PPR repeats span residues Glu-23–Pro-60, Asp-61–Lys-95, Asp-96–Lys-126, Asp-127–Ser-161, Trp-162–Pro-188, Asn-198–Ile-232, Asp-233–Lys-263, Asp-265–Ser-295, Asn-301–Pro-336, and Ser-337–Glu-367. The type E motif; degenerate stretch occupies residues Ile-372 to Glu-447. Residues Gly-448 to Arg-478 form a type E(+) motif region. Residues Glu-479–Trp-573 are type DYW motif.

Belongs to the PPR family. PCMP-H subfamily.

The polypeptide is Pentatricopeptide repeat-containing protein At3g62890 (PCMP-H82) (Arabidopsis thaliana (Mouse-ear cress)).